Here is a 1217-residue protein sequence, read N- to C-terminus: Nuclear matrix constituent protein 1 (1217 aa).

Over residues 1 to 14 (MLTPQRSAWSLKSK) the composition is skewed to polar residues. Residues 1–45 (MLTPQRSAWSLKSKVSSEKPRSKGKGITKNLDSAATPFPPLGLLN) are disordered. Residues 159–746 (VTDLEKALRE…KNQRAEFIKE (588 aa)) are a coiled coil. Residues 892–904 (SEDAAANDNNPAA) show a composition bias toward low complexity. 4 disordered regions span residues 892-969 (SEDA…VVDD), 981-1057 (EEAK…VQAP), 1087-1117 (VQTK…HKVT), and 1152-1217 (ISEM…FFTT). The span at 947-960 (STRRGRGGKTVRRT) shows a compositional bias: basic residues. Polar residues-rich tracts occupy residues 986–1007 (SSQQ…TSNT) and 1087–1103 (VQTK…NQIS). Residues 1173–1186 (EEPATPSSGSSTSG) are compositionally biased toward low complexity. A compositionally biased stretch (acidic residues) spans 1189-1200 (GNDDDMDDDDEE).

The protein belongs to the CRWN family.

The protein resides in the nucleus matrix. Its subcellular location is the nucleus lamina. In terms of biological role, architectural component of nuclear structure that plays different roles in controlling nuclear size and morphology. Involved in the organization of multimeric complexes in the peripheral nucleoskeleton. The polypeptide is Nuclear matrix constituent protein 1 (Allium cepa (Onion)).